The sequence spans 769 residues: MAEDGMLLNFSLDDSVIKPQQRFKGGTWKDRLVAKKIAVKRQNKSRHSAETGAVNSNNPQNPNKINVPTGQRPAKRQRIDGGDFKPTTKSSAGGGGVGNDEQTDRKSYGDRQVISSLFTYNPTAKTVASTDGATHDEDTTEPAKPSNAPLVDGIDTFTSLGLSPSLATHLLTKLNLKTPTAIQKSSITQLLKEECDAFVQAQTGSGKTLAYLLPIVERLMRISSHNKGKKDSEGNTVHRDSGLFAIVLAPTRELCKQISVVLDGLLRCAHWIVAGTVIGGEKKKSEKARLRKGLNILVATPGRLADHLENTKVLDVSNVRWLVLDEGDRLMDLGFEEEIQGIIKKLDERRRPSKIPDLPAKRTTILCSATLKMNVQRLGEISLKEAIHIKADPADEDDEQKDGSKQPEFSAPAQLKQSYAVVAAKLRLVTLTALLKRTFARKGSVMKAIIFVSCADSVDFHFEVFTRRESSEELPDADDENAPSSSNVHGSIATASAFSNPSNNVILHKLHGSLPQHVRTATLSAFAKQKDASVLICTDVAARGLDLPNVDFVIEYDPAFCSDDHLHRIGRTARLGRDGRALIFLLPGNEEGYVDILKGSYREGSSNSVTRNEVNEILKRGFGGNSEAISKGWEDKATDWQLDIERWALEDSTILEMARRAYQSHIRAYATHIAAERHMFNIKDLHLGHLAKSFALRDRPAKINVPGLRPGNEDTKKSFKADRKLASGEKRKMSAREDSSSTTDAAEARKKMQQKLKEHMAGASEFNIA.

Disordered stretches follow at residues 38–107 (AVKR…DRKS) and 127–150 (VAST…NAPL). The span at 55–68 (NSNNPQNPNKINVP) shows a compositional bias: low complexity. The Q motif signature appears at 155-184 (DTFTSLGLSPSLATHLLTKLNLKTPTAIQK). A Helicase ATP-binding domain is found at 188 to 389 (TQLLKEECDA…EISLKEAIHI (202 aa)). Residue 201–208 (AQTGSGKT) coordinates ATP. The short motif at 325-328 (DEGD) is the DEAD box element. Disordered stretches follow at residues 391 to 411 (ADPA…EFSA), 471 to 490 (SEEL…NVHG), and 705 to 769 (VPGL…FNIA). Residues 430-622 (TLTALLKRTF…EVNEILKRGF (193 aa)) form the Helicase C-terminal domain. Acidic residues predominate over residues 472–481 (EELPDADDEN). 2 stretches are compositionally biased toward basic and acidic residues: residues 711-739 (GNED…REDS) and 746-760 (AEAR…KEHM).

Belongs to the DEAD box helicase family. DDX31/DBP7 subfamily.

It localises to the nucleus. The protein resides in the nucleolus. It carries out the reaction ATP + H2O = ADP + phosphate + H(+). Functionally, ATP-binding RNA helicase involved in the biogenesis of 60S ribosomal subunits and is required for the normal formation of 25S and 5.8S rRNAs. The chain is ATP-dependent RNA helicase DBP7 (DBP7) from Coccidioides immitis (strain RS) (Valley fever fungus).